Here is a 72-residue protein sequence, read N- to C-terminus: Omega-conotoxin-like S6.6 (72 aa).

Residues Met-1–Ala-22 form the signal peptide. Positions Asp-23–Arg-45 are excised as a propeptide. 3 cysteine pairs are disulfide-bonded: Cys-46–Cys-61, Cys-53–Cys-65, and Cys-60–Cys-71. Cys-71 is modified (cysteine amide).

Belongs to the conotoxin O1 superfamily. As to expression, expressed by the venom duct.

Its subcellular location is the secreted. Functionally, omega-conotoxins act at presynaptic membranes, they bind and block voltage-gated calcium channels (Cav). This toxin blocks N-, P- and Q-type calcium channels. In Conus striatus (Striated cone), this protein is Omega-conotoxin-like S6.6.